Consider the following 382-residue polypeptide: Mannitol-1-phosphate 5-dehydrogenase (382 aa).

3–14 (ALHFGAGNIGRG) contacts NAD(+).

The protein belongs to the mannitol dehydrogenase family.

The enzyme catalyses D-mannitol 1-phosphate + NAD(+) = beta-D-fructose 6-phosphate + NADH + H(+). The sequence is that of Mannitol-1-phosphate 5-dehydrogenase from Salmonella enteritidis PT4 (strain P125109).